We begin with the raw amino-acid sequence, 208 residues long: Small ribosomal subunit protein uS4 (208 aa).

The S4 RNA-binding domain maps to 98 to 159 (RRLDNVVYRL…KSRNVAAISE (62 aa)).

This sequence belongs to the universal ribosomal protein uS4 family. As to quaternary structure, part of the 30S ribosomal subunit. Contacts protein S5. The interaction surface between S4 and S5 is involved in control of translational fidelity.

Functionally, one of the primary rRNA binding proteins, it binds directly to 16S rRNA where it nucleates assembly of the body of the 30S subunit. With S5 and S12 plays an important role in translational accuracy. This is Small ribosomal subunit protein uS4 from Trichlorobacter lovleyi (strain ATCC BAA-1151 / DSM 17278 / SZ) (Geobacter lovleyi).